Reading from the N-terminus, the 186-residue chain is ATP synthase subunit b (186 aa).

A helical membrane pass occupies residues 25–45; that stretch reads IVWSVVCVAIIAVVFYKYVIP.

This sequence belongs to the ATPase B chain family. As to quaternary structure, F-type ATPases have 2 components, F(1) - the catalytic core - and F(0) - the membrane proton channel. F(1) has five subunits: alpha(3), beta(3), gamma(1), delta(1), epsilon(1). F(0) has three main subunits: a(1), b(2) and c(10-14). The alpha and beta chains form an alternating ring which encloses part of the gamma chain. F(1) is attached to F(0) by a central stalk formed by the gamma and epsilon chains, while a peripheral stalk is formed by the delta and b chains.

Its subcellular location is the cell membrane. Its function is as follows. F(1)F(0) ATP synthase produces ATP from ADP in the presence of a proton or sodium gradient. F-type ATPases consist of two structural domains, F(1) containing the extramembraneous catalytic core and F(0) containing the membrane proton channel, linked together by a central stalk and a peripheral stalk. During catalysis, ATP synthesis in the catalytic domain of F(1) is coupled via a rotary mechanism of the central stalk subunits to proton translocation. Functionally, component of the F(0) channel, it forms part of the peripheral stalk, linking F(1) to F(0). The polypeptide is ATP synthase subunit b (Nocardia farcinica (strain IFM 10152)).